Reading from the N-terminus, the 558-residue chain is 5-aminolevulinate synthase, mitochondrial (558 aa).

Residues 1–25 constitute a mitochondrion transit peptide; it reads MERVVKLAAKHCPFVSKADPSALRR. Positions 103–124 are disordered; sequence TTTPVTKKHQMPKHYASDLNGV. The substrate site is built by Arg-152, Ser-265, and Lys-284. Pyridoxal 5'-phosphate contacts are provided by Ser-317, His-345, and Thr-374. Residue Lys-377 is part of the active site. N6-(pyridoxal phosphate)lysine is present on Lys-377. Residues Thr-406 and Thr-407 each contribute to the pyridoxal 5'-phosphate site. Thr-492 contacts substrate.

This sequence belongs to the class-II pyridoxal-phosphate-dependent aminotransferase family. As to quaternary structure, homodimer. Requires pyridoxal 5'-phosphate as cofactor.

Its subcellular location is the mitochondrion matrix. It carries out the reaction succinyl-CoA + glycine + H(+) = 5-aminolevulinate + CO2 + CoA. The protein operates within porphyrin-containing compound metabolism; protoporphyrin-IX biosynthesis; 5-aminolevulinate from glycine: step 1/1. In terms of biological role, catalyzes the synthesis of 5-aminolevulinate (ALA) from succinyl-CoA and glycine, the first and rate-limiting step in heme biosynthesis. The polypeptide is 5-aminolevulinate synthase, mitochondrial (Schizosaccharomyces pombe (strain 972 / ATCC 24843) (Fission yeast)).